Here is a 316-residue protein sequence, read N- to C-terminus: Probable cell division protein WhiA (316 aa).

The H-T-H motif DNA-binding region spans 280–313 (SLKELGEMLEPPVGKSGVNHRLRKIEKIAEELRT).

The protein belongs to the WhiA family.

Involved in cell division and chromosome segregation. The polypeptide is Probable cell division protein WhiA (Clostridium perfringens (strain 13 / Type A)).